We begin with the raw amino-acid sequence, 865 residues long: Alanine--tRNA ligase (865 aa).

Zn(2+) is bound by residues histidine 556, histidine 560, cysteine 660, and histidine 664.

This sequence belongs to the class-II aminoacyl-tRNA synthetase family. Zn(2+) is required as a cofactor.

Its subcellular location is the cytoplasm. It catalyses the reaction tRNA(Ala) + L-alanine + ATP = L-alanyl-tRNA(Ala) + AMP + diphosphate. Catalyzes the attachment of alanine to tRNA(Ala) in a two-step reaction: alanine is first activated by ATP to form Ala-AMP and then transferred to the acceptor end of tRNA(Ala). Also edits incorrectly charged Ser-tRNA(Ala) and Gly-tRNA(Ala) via its editing domain. The chain is Alanine--tRNA ligase from Vesicomyosocius okutanii subsp. Calyptogena okutanii (strain HA).